The chain runs to 270 residues: Phosphatidylglycerol--prolipoprotein diacylglyceryl transferase (270 aa).

The next 7 membrane-spanning stretches (helical) occupy residues 17–37, 59–79, 95–115, 129–149, 175–195, 202–222, and 237–257; these read LAIR…LWFG, MLFY…VLFY, WEGG…MWVF, FIAP…FING, PSQL…LWLF, MGAV…LAEF, and LSMG…MVVW. Residue Arg-142 coordinates a 1,2-diacyl-sn-glycero-3-phospho-(1'-sn-glycerol).

This sequence belongs to the Lgt family.

Its subcellular location is the cell inner membrane. The catalysed reaction is L-cysteinyl-[prolipoprotein] + a 1,2-diacyl-sn-glycero-3-phospho-(1'-sn-glycerol) = an S-1,2-diacyl-sn-glyceryl-L-cysteinyl-[prolipoprotein] + sn-glycerol 1-phosphate + H(+). It participates in protein modification; lipoprotein biosynthesis (diacylglyceryl transfer). Its function is as follows. Catalyzes the transfer of the diacylglyceryl group from phosphatidylglycerol to the sulfhydryl group of the N-terminal cysteine of a prolipoprotein, the first step in the formation of mature lipoproteins. The polypeptide is Phosphatidylglycerol--prolipoprotein diacylglyceryl transferase (Cupriavidus metallidurans (strain ATCC 43123 / DSM 2839 / NBRC 102507 / CH34) (Ralstonia metallidurans)).